The chain runs to 543 residues: Chaperonin GroEL (543 aa).

Residues 29 to 32, K50, 86 to 90, G413, 480 to 482, and D496 contribute to the ATP site; these read TLGP, DGTTT, and NAA. The segment at 524 to 543 is disordered; sequence EKPEKKESTPASAGAGDMDF.

The protein belongs to the chaperonin (HSP60) family. As to quaternary structure, forms a cylinder of 14 subunits composed of two heptameric rings stacked back-to-back. Interacts with the co-chaperonin GroES.

The protein resides in the cytoplasm. The enzyme catalyses ATP + H2O + a folded polypeptide = ADP + phosphate + an unfolded polypeptide.. Together with its co-chaperonin GroES, plays an essential role in assisting protein folding. The GroEL-GroES system forms a nano-cage that allows encapsulation of the non-native substrate proteins and provides a physical environment optimized to promote and accelerate protein folding. This Thermus thermophilus (strain ATCC BAA-163 / DSM 7039 / HB27) protein is Chaperonin GroEL.